A 346-amino-acid chain; its full sequence is Anthocyanidin 3-O-glucosyltransferase 2 (346 aa).

Residues alanine 221, glutamine 223, histidine 238, tryptophan 241, asparagine 242, serine 243, and glutamate 246 each contribute to the UDP-alpha-D-glucose site. Alanine 261 contacts an anthocyanidin. The UDP-alpha-D-glucose site is built by glutamate 262 and glutamine 263.

This sequence belongs to the UDP-glycosyltransferase family. Expressed in cotyledons, roots and leaves.

It carries out the reaction an anthocyanidin + UDP-alpha-D-glucose + H(+) = an anthocyanidin 3-O-beta-D-glucoside + UDP. It participates in pigment biosynthesis; anthocyanin biosynthesis. Its function is as follows. In the presence of other necessary color factors, this glycosylation reaction allows the accumulation of anthocyanin pigments. This is Anthocyanidin 3-O-glucosyltransferase 2 (GT2) from Manihot esculenta (Cassava).